The chain runs to 92 residues: Large ribosomal subunit protein bL25 (92 aa).

This sequence belongs to the bacterial ribosomal protein bL25 family. As to quaternary structure, part of the 50S ribosomal subunit; part of the 5S rRNA/L5/L18/L25 subcomplex. Contacts the 5S rRNA. Binds to the 5S rRNA independently of L5 and L18.

Functionally, this is one of the proteins that binds to the 5S RNA in the ribosome where it forms part of the central protuberance. The protein is Large ribosomal subunit protein bL25 of Vibrio cholerae serotype O1 (strain ATCC 39541 / Classical Ogawa 395 / O395).